Here is a 1302-residue protein sequence, read N- to C-terminus: Vascular endothelial growth factor receptor kdr-like (1302 aa).

Positions 1-28 (MTPLKTSVKAFFTLHVLFSCISHGLVEG) are cleaved as a signal peptide. Over 29 to 740 (SRLPDPQLLP…GEDGKPNIEV (712 aa)) the chain is Extracellular. Ig-like C2-type domains lie at 34–115 (PQLL…HEVS), 143–206 (DPYF…VDNA), 222–318 (KNLA…TKVI), 326–412 (NVTH…ISYK), 419–542 (PKIF…FYVD), 545–636 (PQPF…SALT), and 643–728 (PWLM…AVIT). 2 cysteine pairs are disulfide-bonded: C55/C104 and C150/C199. Residues N69 and N97 are each glycosylated (N-linked (GlcNAc...) asparagine). Residues N242, N265, N291, N326, N370, N380, N408, N453, N466, N505, N517, N532, N607, N611, N630, N648, and N655 are each glycosylated (N-linked (GlcNAc...) asparagine). The cysteines at positions 243 and 302 are disulfide-linked. Cysteines 444 and 524 form a disulfide. Cysteines 565 and 618 form a disulfide. Residues C664 and C712 are joined by a disulfide bond. A helical transmembrane segment spans residues 741-761 (IILVSTGAAATFLWIMLILFI). Residues 762-1302 (RKLRKPSSAD…YVVRYSTPPV (541 aa)) lie on the Cytoplasmic side of the membrane. The region spanning 809 to 1139 (LRLGKTLGHG…ELVERLGDLL (331 aa)) is the Protein kinase domain. ATP is bound by residues 815 to 823 (LGHGAFGKV) and K843. D1003 serves as the catalytic Proton acceptor. Y1029, Y1034, and Y1150 each carry phosphotyrosine; by autocatalysis. Disordered stretches follow at residues 1159–1179 (TKAD…PVSL) and 1266–1292 (PLVP…PDYN). A compositionally biased stretch (polar residues) spans 1162–1176 (DPSNQSPTEETSTRP).

This sequence belongs to the protein kinase superfamily. Tyr protein kinase family. CSF-1/PDGF receptor subfamily. In terms of assembly, interacts with isoform VEGF165 of vegfaa and isoform VEGF171 of vegfab. In terms of processing, phosphorylated and activated by vegfaa and vegfab. As to expression, first expressed in embryos between 5- and 7-somites. At 7 somites, expressed in discrete bilateral stripes both anteriorly and posteriorly, and in a transverse ectodermal stripe in the hindbrain. From 7-somites, expression seems to extend caudally from the head, and in both directions in the trunk region, until by 20-somites, expression is detected as a continuous band from the anterior head region to the tailbud. Concurrently, cells expressing kdrl in the mid- and posterior trunk regions converge medially. By 24 hours post-fertilization (hpf), expressed in all the endothelial cells lining the vasculature.

It localises to the cell membrane. The enzyme catalyses L-tyrosyl-[protein] + ATP = O-phospho-L-tyrosyl-[protein] + ADP + H(+). Its function is as follows. Receptor for VEGF or VEGFC. Has a tyrosine-protein kinase activity. Combinations of multiple VEGF receptors are required for development of different blood vessel types in the embryo. Involved in angiogenesis, specifically in VEGF-induced sprouting of new blood vessels. Particularly involved in artery formation. Does not appear to be required for hematopoiesis. This Danio rerio (Zebrafish) protein is Vascular endothelial growth factor receptor kdr-like (kdrl).